We begin with the raw amino-acid sequence, 232 residues long: tRNA (guanine-N(1)-)-methyltransferase (232 aa).

Residues glycine 114 and 134-139 (IGDYIL) each bind S-adenosyl-L-methionine.

It belongs to the RNA methyltransferase TrmD family. As to quaternary structure, homodimer.

The protein resides in the cytoplasm. The catalysed reaction is guanosine(37) in tRNA + S-adenosyl-L-methionine = N(1)-methylguanosine(37) in tRNA + S-adenosyl-L-homocysteine + H(+). Functionally, specifically methylates guanosine-37 in various tRNAs. The sequence is that of tRNA (guanine-N(1)-)-methyltransferase from Wolbachia pipientis subsp. Culex pipiens (strain wPip).